The sequence spans 122 residues: Holo-[acyl-carrier-protein] synthase (122 aa).

Mg(2+) contacts are provided by Asp-8 and Glu-56.

It belongs to the P-Pant transferase superfamily. AcpS family. It depends on Mg(2+) as a cofactor.

It localises to the cytoplasm. The catalysed reaction is apo-[ACP] + CoA = holo-[ACP] + adenosine 3',5'-bisphosphate + H(+). Transfers the 4'-phosphopantetheine moiety from coenzyme A to a Ser of acyl-carrier-protein. The protein is Holo-[acyl-carrier-protein] synthase of Alkaliphilus oremlandii (strain OhILAs) (Clostridium oremlandii (strain OhILAs)).